Reading from the N-terminus, the 136-residue chain is Cyclase aurE (136 aa).

This sequence belongs to the aurE cyclase family.

It participates in polyketide biosynthesis. Its function is as follows. Cyclase; part of the gene cluster that mediates the biosynthesis of aurovertins, fungal polyketides that exhibit potent inhibition of adenosine triphosphate synthase. Tha biosynthesis starts with the HR-PKS aurA that selects propionate as the starter unit; synthesizes a hexa-ene chain through the repeated functions of the KR and DH domains in the first six iterations; selectively introduces three alpha-methyl substitutions at C4, C6, and C16 using the S-adensylmethionine-dependent cMET; and shuts off KR and DH in the last three iterations to afford a 1,3,5-triketo portion that can undergo intramolecular cyclization to yield the alpha-pyrone intermediate. AurE may act as a cyclase and enhances the rate of pyrone formation and product release of aurA. The methyltransferase aurB then methylates the C17 hydroxyl group. C17 methylation is required to initiate epoxidation by the downstream monooxygenase aurC. The monooxygenase aurC and the epoxide hydrolase aurD can iteratively transform the terminal triene portion of the methylated precursor into the dioxabicyclo[3.2.1]octane scaffold of aurovertin E. Epoxidation modifications of the precursor occur in two separate steps; bis-epoxidation of the two terminal olefins takes place first, followed by another epoxidation that occurs at C7-C8 after tetrahydrofuran formation. The O-acyltransferase aurG converts aurovertin E to aurovertin A. This chain is Cyclase aurE, found in Calcarisporium arbuscula (Dendryphion arbuscula).